The sequence spans 46 residues: Short transmembrane mitochondrial protein 1 (46 aa).

The chain crosses the membrane as a helical span at residues 7–23 (GFTLGNVVGMYLAQNYE).

This sequence belongs to the STMP1 family. Widely expressed. Expressed more abundantly in brain compared with other tissues such as heart, muscle and liver.

The protein localises to the mitochondrion inner membrane. The protein resides in the mitochondrion outer membrane. It localises to the mitochondrion intermembrane space. Microprotein involved in mitochondrial respiratory chain complex III (ubiquinol-cytochrome c oxidoreductase) and complex IV (mitochondrial cytochrome c oxidase complex) assembly. Required for the formation of mitochondrial supercomplexes (SCs). Also required for the activation of the NLRP3 inflammasome. In Danio rerio (Zebrafish), this protein is Short transmembrane mitochondrial protein 1.